Reading from the N-terminus, the 482-residue chain is tRNA sulfurtransferase (482 aa).

Residues 61–165 (LAIRDALTRI…DDRLLLIKGR (105 aa)) form the THUMP domain. ATP is bound by residues 183–184 (LI), Lys-265, Gly-287, and Gln-296. A disulfide bridge links Cys-344 with Cys-456. The Rhodanese domain maps to 404–482 (FGPNDVILDI…GFENVKAYRP (79 aa)). Cys-456 serves as the catalytic Cysteine persulfide intermediate.

Belongs to the ThiI family.

It localises to the cytoplasm. The catalysed reaction is [ThiI sulfur-carrier protein]-S-sulfanyl-L-cysteine + a uridine in tRNA + 2 reduced [2Fe-2S]-[ferredoxin] + ATP + H(+) = [ThiI sulfur-carrier protein]-L-cysteine + a 4-thiouridine in tRNA + 2 oxidized [2Fe-2S]-[ferredoxin] + AMP + diphosphate. It carries out the reaction [ThiS sulfur-carrier protein]-C-terminal Gly-Gly-AMP + S-sulfanyl-L-cysteinyl-[cysteine desulfurase] + AH2 = [ThiS sulfur-carrier protein]-C-terminal-Gly-aminoethanethioate + L-cysteinyl-[cysteine desulfurase] + A + AMP + 2 H(+). Its pathway is cofactor biosynthesis; thiamine diphosphate biosynthesis. Its function is as follows. Catalyzes the ATP-dependent transfer of a sulfur to tRNA to produce 4-thiouridine in position 8 of tRNAs, which functions as a near-UV photosensor. Also catalyzes the transfer of sulfur to the sulfur carrier protein ThiS, forming ThiS-thiocarboxylate. This is a step in the synthesis of thiazole, in the thiamine biosynthesis pathway. The sulfur is donated as persulfide by IscS. The sequence is that of tRNA sulfurtransferase from Salmonella gallinarum (strain 287/91 / NCTC 13346).